The following is a 170-amino-acid chain: Adenine phosphoribosyltransferase (170 aa).

This sequence belongs to the purine/pyrimidine phosphoribosyltransferase family. As to quaternary structure, homodimer.

It is found in the cytoplasm. The catalysed reaction is AMP + diphosphate = 5-phospho-alpha-D-ribose 1-diphosphate + adenine. Its pathway is purine metabolism; AMP biosynthesis via salvage pathway; AMP from adenine: step 1/1. Catalyzes a salvage reaction resulting in the formation of AMP, that is energically less costly than de novo synthesis. The polypeptide is Adenine phosphoribosyltransferase (Streptococcus pneumoniae (strain Taiwan19F-14)).